The sequence spans 666 residues: Endogenous retrovirus group K member 10 Gag polyprotein (666 aa).

A lipid anchor (N-myristoyl glycine) is attached at glycine 2. The segment at 164–183 (EGKGPELMGPSESKPRGTSP) is disordered. 2 CCHC-type zinc fingers span residues 544–561 (GKCY…NCPV) and 580–597 (DLCP…QCRS). Positions 598 to 642 (KFDKNGQPLSGNEQRGQPQAPQQTGAFPIQPFVPQGFQGQQPPLS) are disordered. Over residues 604–622 (QPLSGNEQRGQPQAPQQTG) the composition is skewed to polar residues. Residues 624-640 (FPIQPFVPQGFQGQQPP) are compositionally biased toward low complexity.

It belongs to the beta type-B retroviral Gag protein family. HERV class-II K(HML-2) gag subfamily. Myristoylation is essential for retroviral assembly. Alteration of the glycine residue leads to a block in the budding of particles and an accumulation of Gag inside the cell. Post-translationally, specific enzymatic cleavages may yield mature proteins.

It localises to the cell membrane. Functionally, the products of the Gag polyproteins of infectious retroviruses perform highly complex orchestrated tasks during the assembly, budding, maturation, and infection stages of the viral replication cycle. During viral assembly, the proteins form membrane associations and self-associations that ultimately result in budding of an immature virion from the infected cell. Gag precursors also function during viral assembly to selectively bind and package two plus strands of genomic RNA. Endogenous Gag proteins may have kept, lost or modified their original function during evolution. The protein is Endogenous retrovirus group K member 10 Gag polyprotein (ERVK-10) of Homo sapiens (Human).